Here is a 787-residue protein sequence, read N- to C-terminus: Zinc finger protein 227 (787 aa).

The region spanning valine 23 to serine 94 is the KRAB domain. 18 C2H2-type zinc fingers span residues histidine 243–histidine 275, tyrosine 312–histidine 334, tyrosine 340–histidine 362, tyrosine 368–histidine 390, tyrosine 396–histidine 418, tyrosine 424–histidine 446, tyrosine 452–histidine 474, tyrosine 480–histidine 502, phenylalanine 508–histidine 530, tyrosine 536–histidine 558, tyrosine 564–histidine 586, tyrosine 592–histidine 614, tyrosine 620–histidine 642, tyrosine 648–histidine 670, tyrosine 676–histidine 698, histidine 704–histidine 726, phenylalanine 732–histidine 754, and tyrosine 760–histidine 782.

The protein belongs to the krueppel C2H2-type zinc-finger protein family.

The protein localises to the nucleus. In terms of biological role, may be involved in transcriptional regulation. In Bos taurus (Bovine), this protein is Zinc finger protein 227 (ZNF227).